The following is a 626-amino-acid chain: MARAVGIDLGTTNSCIATLEGGEPTVIVNAEGARTTPSVVAFSKSGEILVGEVAKRQAVTNVDRTISSVKRHMGSDWTVDIDGKKWTPQEISAQILMKLKRDAEAYLGEPVTDAVITCPAYFNDAQRQATKDAGKIAGLNVLRIINEPTAAALAYGLEKGKEDERILVFDLGGGTFDVSLLEIGKDDDGFSTIQVQATNGDNHLGGDDWDQKIIDWLVSEVKNKYGVDLSKDKIALQRLKEAAEQAKKELSSSTSTSISMQYLAMTPDGTPVHLDETLTRAHFEEMTSDLLGRCRTPFNNVLHDAGISVSDIDHVVLVGGSTRMPAVKELVKELTGGKEANQSVNPDEVVAVGAAVQSGVIKGDRKDVLLIDVTPLSLGIETKGGIMTKLIDRNTAIPTKRSEVFSTAEDNQPSVLIQVYQGEREFARDNKPLGTFELTGIAPAPRGVPQIEVTFDIDANGIVHVSAKDKGTGKEQSMTITGGSGLPKDEIDRMVKEAEAHEAEDKKRKEDAETRNQAEAFAYSTEKLVNDNKDKLSDDIVKEVTDKVNALKEALKGDDTEKVKTAQTELMTAAQKIGQVLYAQQGAEGAAAGADGAGASAGSASGSDDDTVEAEVVDDDDDKDNK.

Thr-175 is subject to Phosphothreonine; by autocatalysis. Low complexity predominate over residues Gly-586 to Gly-606. Positions Gly-586 to Lys-626 are disordered. The span at Ser-607–Lys-626 shows a compositional bias: acidic residues.

It belongs to the heat shock protein 70 family.

In terms of biological role, acts as a chaperone. This chain is Chaperone protein DnaK, found in Bifidobacterium longum (strain DJO10A).